The following is a 320-amino-acid chain: 33 kDa chaperonin (320 aa).

Positions 1 to 17 (MTDASGSERLKRTKDIS) are enriched in basic and acidic residues. Residues 1–27 (MTDASGSERLKRTKDISESTPPSSLPD) form a disordered region. 2 disulfides stabilise this stretch: Cys-262–Cys-264 and Cys-295–Cys-298.

The protein belongs to the HSP33 family. Under oxidizing conditions two disulfide bonds are formed involving the reactive cysteines. Under reducing conditions zinc is bound to the reactive cysteines and the protein is inactive.

The protein resides in the cytoplasm. In terms of biological role, redox regulated molecular chaperone. Protects both thermally unfolding and oxidatively damaged proteins from irreversible aggregation. Plays an important role in the bacterial defense system toward oxidative stress. This chain is 33 kDa chaperonin, found in Synechococcus sp. (strain JA-3-3Ab) (Cyanobacteria bacterium Yellowstone A-Prime).